A 562-amino-acid polypeptide reads, in one-letter code: Arginine--tRNA ligase (562 aa).

The short motif at 129–139 (ANPTGPLHVGH) is the 'HIGH' region element.

It belongs to the class-I aminoacyl-tRNA synthetase family. As to quaternary structure, monomer.

It localises to the cytoplasm. The catalysed reaction is tRNA(Arg) + L-arginine + ATP = L-arginyl-tRNA(Arg) + AMP + diphosphate. In Xanthomonas oryzae pv. oryzae (strain KACC10331 / KXO85), this protein is Arginine--tRNA ligase.